Here is an 869-residue protein sequence, read N- to C-terminus: Probable inorganic carbon transporter subunit DabA (869 aa).

Positions 1 to 32 (MSTATLEQRAKRGEAPRANDAGHCAHPADGAR) are disordered. Positions 8–17 (QRAKRGEAPR) are enriched in basic and acidic residues. Cys-376, Asp-378, His-555, and Cys-570 together coordinate Zn(2+).

The protein belongs to the inorganic carbon transporter (TC 9.A.2) DabA family. In terms of assembly, forms a complex with DabB. Requires Zn(2+) as cofactor.

It is found in the cell inner membrane. Functionally, part of an energy-coupled inorganic carbon pump. The protein is Probable inorganic carbon transporter subunit DabA of Burkholderia multivorans (strain ATCC 17616 / 249).